A 263-amino-acid chain; its full sequence is Small ribosomal subunit protein uS2 (263 aa).

A disordered region spans residues lysine 223 to alanine 246. Residues glutamine 228–serine 240 are compositionally biased toward acidic residues.

This sequence belongs to the universal ribosomal protein uS2 family.

The polypeptide is Small ribosomal subunit protein uS2 (Campylobacter curvus (strain 525.92)).